We begin with the raw amino-acid sequence, 388 residues long: MTISETWLLPDGVADVLPEQAQVIEKLRREAIDFLAVRGYQLVYTPFIEYIESLSSLSESNQDLDLVTFKVIDQLSGRLLGIRADMTPQVARIDAHVRPVEGVARYCYAGTVLHTKPQNFNATRAPLQLGAELYGHDSIEADVEMVDVMLGLIENAYTLQGAHLDLGHVGLFRSLVKYAGLSKNEEHELSDLYQRKALPELAEFTQNLNMGSDFYALGRYASDLDALQAHLSADILKDAEFDAALNALKTTLEQIKNRWPALNVGIDVVELRSYHYHTGLMYAVYAPNRAAPLAQGGRYDGIGEHFGRARPATGFSCDLYALGANQFAEIETVVAPKGTEADLLKAIANARSEGLRVVQLLGNDDLSSIPYATHQLVLQNGQWNIEKI.

It belongs to the class-II aminoacyl-tRNA synthetase family. HisZ subfamily. In terms of assembly, heteromultimer composed of HisG and HisZ subunits.

The protein resides in the cytoplasm. It functions in the pathway amino-acid biosynthesis; L-histidine biosynthesis; L-histidine from 5-phospho-alpha-D-ribose 1-diphosphate: step 1/9. Its function is as follows. Required for the first step of histidine biosynthesis. May allow the feedback regulation of ATP phosphoribosyltransferase activity by histidine. In Acinetobacter baumannii (strain AB307-0294), this protein is ATP phosphoribosyltransferase regulatory subunit.